Reading from the N-terminus, the 150-residue chain is D-aminoacyl-tRNA deacylase (150 aa).

A Gly-cisPro motif, important for rejection of L-amino acids motif is present at residues 133-134 (GP).

It belongs to the DTD family. In terms of assembly, homodimer.

Its subcellular location is the cytoplasm. The enzyme catalyses glycyl-tRNA(Ala) + H2O = tRNA(Ala) + glycine + H(+). It catalyses the reaction a D-aminoacyl-tRNA + H2O = a tRNA + a D-alpha-amino acid + H(+). Its function is as follows. An aminoacyl-tRNA editing enzyme that deacylates mischarged D-aminoacyl-tRNAs. Also deacylates mischarged glycyl-tRNA(Ala), protecting cells against glycine mischarging by AlaRS. Acts via tRNA-based rather than protein-based catalysis; rejects L-amino acids rather than detecting D-amino acids in the active site. By recycling D-aminoacyl-tRNA to D-amino acids and free tRNA molecules, this enzyme counteracts the toxicity associated with the formation of D-aminoacyl-tRNA entities in vivo and helps enforce protein L-homochirality. This Kocuria rhizophila (strain ATCC 9341 / DSM 348 / NBRC 103217 / DC2201) protein is D-aminoacyl-tRNA deacylase.